Consider the following 142-residue polypeptide: Mitochondrial import inner membrane translocase subunit TIM22-4 (142 aa).

4 helical membrane-spanning segments follow: residues 21-41 (VTSG…LGAL), 70-88 (SCKT…ECIV), 97-113 (TVNT…SMSA), and 120-137 (ACIG…IEKF).

The protein belongs to the Tim17/Tim22/Tim23 family.

It is found in the mitochondrion inner membrane. Its function is as follows. Essential core component of the TIM22 complex, a complex that mediates the import and insertion of multi-pass transmembrane proteins into the mitochondrial inner membrane. The protein is Mitochondrial import inner membrane translocase subunit TIM22-4 (TIM22-4) of Arabidopsis thaliana (Mouse-ear cress).